The sequence spans 128 residues: Aspartate 1-decarboxylase (128 aa).

The Schiff-base intermediate with substrate; via pyruvic acid role is filled by Ser-25. Residue Ser-25 is modified to Pyruvic acid (Ser). A substrate-binding site is contributed by Thr-57. The active-site Proton donor is the Tyr-58. A substrate-binding site is contributed by 73–75 (GSA).

The protein belongs to the PanD family. Heterooctamer of four alpha and four beta subunits. Pyruvate is required as a cofactor. Is synthesized initially as an inactive proenzyme, which is activated by self-cleavage at a specific serine bond to produce a beta-subunit with a hydroxyl group at its C-terminus and an alpha-subunit with a pyruvoyl group at its N-terminus.

The protein resides in the cytoplasm. The enzyme catalyses L-aspartate + H(+) = beta-alanine + CO2. It participates in cofactor biosynthesis; (R)-pantothenate biosynthesis; beta-alanine from L-aspartate: step 1/1. Catalyzes the pyruvoyl-dependent decarboxylation of aspartate to produce beta-alanine. The protein is Aspartate 1-decarboxylase of Paraburkholderia phytofirmans (strain DSM 17436 / LMG 22146 / PsJN) (Burkholderia phytofirmans).